The chain runs to 393 residues: 4-hydroxyphenylpyruvate dioxygenase (393 aa).

Thr2 carries the post-translational modification N-acetylthreonine. 2 consecutive VOC domains span residues 18-149 (HFHS…LVEK) and 180-338 (MIDH…IFTK). Lys132 bears the N6-succinyllysine mark. His183 provides a ligand contact to Fe cation. Phosphoserine occurs at positions 211, 226, and 250. Fe cation is bound by residues His266 and Glu349.

Belongs to the 4HPPD family. As to quaternary structure, homodimer. The cofactor is Fe cation.

The protein localises to the cytoplasm. Its subcellular location is the endoplasmic reticulum membrane. The protein resides in the golgi apparatus membrane. It catalyses the reaction 3-(4-hydroxyphenyl)pyruvate + O2 = homogentisate + CO2. It participates in amino-acid degradation; L-phenylalanine degradation; acetoacetate and fumarate from L-phenylalanine: step 3/6. In terms of biological role, catalyzes the conversion of 4-hydroxyphenylpyruvic acid to homogentisic acid, one of the steps in tyrosine catabolism. This is 4-hydroxyphenylpyruvate dioxygenase (HPD) from Homo sapiens (Human).